The sequence spans 238 residues: Large ribosomal subunit protein uL1 (238 aa).

The protein belongs to the universal ribosomal protein uL1 family. As to quaternary structure, part of the 50S ribosomal subunit.

Functionally, binds directly to 23S rRNA. The L1 stalk is quite mobile in the ribosome, and is involved in E site tRNA release. In terms of biological role, protein L1 is also a translational repressor protein, it controls the translation of the L11 operon by binding to its mRNA. This Salinispora tropica (strain ATCC BAA-916 / DSM 44818 / JCM 13857 / NBRC 105044 / CNB-440) protein is Large ribosomal subunit protein uL1.